Reading from the N-terminus, the 822-residue chain is Nose resistant to fluoxetine protein 6 (822 aa).

Positions 1–24 are cleaved as a signal peptide; that stretch reads MGNMRRLLIFAVLVILTVISNSKS. Asn236 carries an N-linked (GlcNAc...) asparagine glycan. 3 helical membrane-spanning segments follow: residues 306 to 326, 617 to 637, and 655 to 675; these read LAMF…FGTL, PYIR…LNAW, and IICW…LYWF.

It belongs to the acyltransferase 3 family. In terms of tissue distribution, in L1 larvae through to adult, hyp3 and hyp5, the most anterior cells in the hypodermis, and in intestine. Other hypodermal cells show weaker expression.

It localises to the membrane. Its function is as follows. Plays a role in the uptake of a range of molecules including lipids and xenobiotic compounds from the intestine to surrounding tissues. Mediates transport of lipids from intestine to the reproductive tract. Required for efficient yolk transport into oocytes. Vital for embryonic development. The protein is Nose resistant to fluoxetine protein 6 (nrf-6) of Caenorhabditis elegans.